The following is a 208-amino-acid chain: MSNPQAERLVTFLIENGIQDQKVLDAIYLLPRESFLSQAMHHQAYDNNALPIGQGQTISQPYIVAKMTELLELQQDSRVLEIGTGSGYQTAVLAQLVDHVYSVERIKSLQWDAKRRLKQLDFYNISTKHGDGWQGWSSKAPFDAIIVTAAAESIPQALLQQLKDGGRLLIPVGDDEQQLLKIVRHGDEFLSSVIEMVRFVPLVPGELA.

Ser59 is a catalytic residue.

This sequence belongs to the methyltransferase superfamily. L-isoaspartyl/D-aspartyl protein methyltransferase family.

The protein localises to the cytoplasm. It catalyses the reaction [protein]-L-isoaspartate + S-adenosyl-L-methionine = [protein]-L-isoaspartate alpha-methyl ester + S-adenosyl-L-homocysteine. Its function is as follows. Catalyzes the methyl esterification of L-isoaspartyl residues in peptides and proteins that result from spontaneous decomposition of normal L-aspartyl and L-asparaginyl residues. It plays a role in the repair and/or degradation of damaged proteins. The sequence is that of Protein-L-isoaspartate O-methyltransferase from Vibrio atlanticus (strain LGP32) (Vibrio splendidus (strain Mel32)).